A 229-amino-acid chain; its full sequence is N-(5'-phosphoribosyl)anthranilate isomerase (229 aa).

It belongs to the TrpF family.

It carries out the reaction N-(5-phospho-beta-D-ribosyl)anthranilate = 1-(2-carboxyphenylamino)-1-deoxy-D-ribulose 5-phosphate. It participates in amino-acid biosynthesis; L-tryptophan biosynthesis; L-tryptophan from chorismate: step 3/5. The polypeptide is N-(5'-phosphoribosyl)anthranilate isomerase (Clostridium beijerinckii (strain ATCC 51743 / NCIMB 8052) (Clostridium acetobutylicum)).